The sequence spans 81 residues: Acyl carrier protein (81 aa).

The Carrier domain maps to S4–V79. The residue at position 39 (S39) is an O-(pantetheine 4'-phosphoryl)serine.

This sequence belongs to the acyl carrier protein (ACP) family. In terms of processing, 4'-phosphopantetheine is transferred from CoA to a specific serine of apo-ACP by AcpS. This modification is essential for activity because fatty acids are bound in thioester linkage to the sulfhydryl of the prosthetic group.

It is found in the cytoplasm. Its pathway is lipid metabolism; fatty acid biosynthesis. In terms of biological role, carrier of the growing fatty acid chain in fatty acid biosynthesis. The chain is Acyl carrier protein from Thermosynechococcus vestitus (strain NIES-2133 / IAM M-273 / BP-1).